A 276-amino-acid chain; its full sequence is Pantothenate synthetase (276 aa).

27 to 34 (MGALHKGH) provides a ligand contact to ATP. The active-site Proton donor is the His-34. Gln-58 is a binding site for (R)-pantoate. Gln-58 provides a ligand contact to beta-alanine. An ATP-binding site is contributed by 147–150 (GKKD). Gln-153 contacts (R)-pantoate. ATP-binding positions include Val-176 and 184 to 187 (LSSR).

Belongs to the pantothenate synthetase family. As to quaternary structure, homodimer.

It is found in the cytoplasm. The enzyme catalyses (R)-pantoate + beta-alanine + ATP = (R)-pantothenate + AMP + diphosphate + H(+). It participates in cofactor biosynthesis; (R)-pantothenate biosynthesis; (R)-pantothenate from (R)-pantoate and beta-alanine: step 1/1. Functionally, catalyzes the condensation of pantoate with beta-alanine in an ATP-dependent reaction via a pantoyl-adenylate intermediate. This Helicobacter pylori (strain Shi470) protein is Pantothenate synthetase.